Here is a 197-residue protein sequence, read N- to C-terminus: Imidazoleglycerol-phosphate dehydratase (197 aa).

This sequence belongs to the imidazoleglycerol-phosphate dehydratase family.

The protein localises to the cytoplasm. The catalysed reaction is D-erythro-1-(imidazol-4-yl)glycerol 3-phosphate = 3-(imidazol-4-yl)-2-oxopropyl phosphate + H2O. It functions in the pathway amino-acid biosynthesis; L-histidine biosynthesis; L-histidine from 5-phospho-alpha-D-ribose 1-diphosphate: step 6/9. The sequence is that of Imidazoleglycerol-phosphate dehydratase from Nitrobacter hamburgensis (strain DSM 10229 / NCIMB 13809 / X14).